We begin with the raw amino-acid sequence, 354 residues long: Peptide chain release factor 1 (354 aa).

Glutamine 230 carries the N5-methylglutamine modification.

The protein belongs to the prokaryotic/mitochondrial release factor family. In terms of processing, methylated by PrmC. Methylation increases the termination efficiency of RF1.

It is found in the cytoplasm. In terms of biological role, peptide chain release factor 1 directs the termination of translation in response to the peptide chain termination codons UAG and UAA. This is Peptide chain release factor 1 from Rhodospirillum rubrum (strain ATCC 11170 / ATH 1.1.1 / DSM 467 / LMG 4362 / NCIMB 8255 / S1).